A 462-amino-acid polypeptide reads, in one-letter code: Argininosuccinate lyase (462 aa).

This sequence belongs to the lyase 1 family. Argininosuccinate lyase subfamily.

The protein resides in the cytoplasm. It catalyses the reaction 2-(N(omega)-L-arginino)succinate = fumarate + L-arginine. The protein operates within amino-acid biosynthesis; L-arginine biosynthesis; L-arginine from L-ornithine and carbamoyl phosphate: step 3/3. The chain is Argininosuccinate lyase from Streptococcus agalactiae serotype Ia (strain ATCC 27591 / A909 / CDC SS700).